A 310-amino-acid chain; its full sequence is Putative S-adenosyl-L-methionine-dependent methyltransferase MAB_4587c (310 aa).

Residues D126 and 155–156 (DL) contribute to the S-adenosyl-L-methionine site.

The protein belongs to the UPF0677 family.

In terms of biological role, exhibits S-adenosyl-L-methionine-dependent methyltransferase activity. The sequence is that of Putative S-adenosyl-L-methionine-dependent methyltransferase MAB_4587c from Mycobacteroides abscessus (strain ATCC 19977 / DSM 44196 / CCUG 20993 / CIP 104536 / JCM 13569 / NCTC 13031 / TMC 1543 / L948) (Mycobacterium abscessus).